The following is a 250-amino-acid chain: Probable transcriptional regulatory protein Plut_1643 (250 aa).

This sequence belongs to the TACO1 family.

It is found in the cytoplasm. The protein is Probable transcriptional regulatory protein Plut_1643 of Chlorobium luteolum (strain DSM 273 / BCRC 81028 / 2530) (Pelodictyon luteolum).